The chain runs to 214 residues: Peptide methionine sulfoxide reductase MsrA 2 (214 aa).

The active site involves cysteine 45.

Belongs to the MsrA Met sulfoxide reductase family.

It carries out the reaction L-methionyl-[protein] + [thioredoxin]-disulfide + H2O = L-methionyl-(S)-S-oxide-[protein] + [thioredoxin]-dithiol. It catalyses the reaction [thioredoxin]-disulfide + L-methionine + H2O = L-methionine (S)-S-oxide + [thioredoxin]-dithiol. Functionally, has an important function as a repair enzyme for proteins that have been inactivated by oxidation. Catalyzes the reversible oxidation-reduction of methionine sulfoxide in proteins to methionine. The polypeptide is Peptide methionine sulfoxide reductase MsrA 2 (msrA2) (Synechocystis sp. (strain ATCC 27184 / PCC 6803 / Kazusa)).